An 892-amino-acid polypeptide reads, in one-letter code: Ice-binding protein 1 (892 aa).

The N-terminal stretch at 1 to 23 (MNHSIKKTYLVFTMLLGFILLAG) is a signal peptide. Cys24 carries the N-palmitoyl cysteine lipid modification. Cys24 carries S-diacylglycerol cysteine lipidation. BIG2 domains are found at residues 43 to 111 (TSIA…ITAS), 134 to 205 (TALA…SLGS), 221 to 288 (SIAL…ITAD), 306 to 386 (TSIM…TVTV), 392 to 471 (TSIA…TNLT), 478 to 558 (NSIV…NLTV), and 565 to 638 (SIDV…QASL). An Ice-binding site motif (T-A/G-X-T/N) motif is present at residues 866-869 (TGAN).

It belongs to the ice-binding protein family.

It localises to the cell outer membrane. Its function is as follows. Ice-binding adhesion protein that adsorbs this bacterium onto ice to maintain a favorable position in its aquatic habitat. Inhibits growth of the ice crystals. Has high thermal hysteresis (TH) activity, which is the ability to lower the freezing point of an aqueous solution below its melting point. The TH activity of this protein is approximately 1.4 degrees Celsius at 25 uM and little below 2 degrees Celsius at 80 uM. The sequence is that of Ice-binding protein 1 from Shewanella frigidimarina (strain NCIMB 400).